We begin with the raw amino-acid sequence, 347 residues long: Phosphoribosylformylglycinamidine cyclo-ligase (347 aa).

The protein belongs to the AIR synthase family.

The protein resides in the cytoplasm. It catalyses the reaction 2-formamido-N(1)-(5-O-phospho-beta-D-ribosyl)acetamidine + ATP = 5-amino-1-(5-phospho-beta-D-ribosyl)imidazole + ADP + phosphate + H(+). The protein operates within purine metabolism; IMP biosynthesis via de novo pathway; 5-amino-1-(5-phospho-D-ribosyl)imidazole from N(2)-formyl-N(1)-(5-phospho-D-ribosyl)glycinamide: step 2/2. This is Phosphoribosylformylglycinamidine cyclo-ligase from Prochlorococcus marinus subsp. pastoris (strain CCMP1986 / NIES-2087 / MED4).